Reading from the N-terminus, the 343-residue chain is MGGPRGAGWVAAGLLLGAGACYCIYRLTRGRRRGDRELGIRSSKSAGALEEGTSEGQLCGRSARPQTGGTWESQWSKTSQPEDLTDGSYDDVLNAEQLQKLLYLLESTEDPVIIERALITLGNNAAFSVNQAIIRELGGIPIVANKINHSNQSIKEKALNALNNLSVNVENQIKIKIYISQVCEDVFSGPLNSAVQLAGLTLLTNMTVTNDHQHMLHSYITDLFQVLLTGNGNTKVQVLKLLLNLSENPAMTEGLLRAQVDSSFLSLYDSHVAKEILLRVLTLFQNIKNCLKIEGHLAVQPTFTEGSLFFLLHGEECAQKIRALVDHHDAEVKEKVVTIIPKI.

Residues 5-27 traverse the membrane as a helical segment; it reads RGAGWVAAGLLLGAGACYCIYRL. A disordered region spans residues 43–83; sequence SKSAGALEEGTSEGQLCGRSARPQTGGTWESQWSKTSQPED. At S45 the chain carries Phosphoserine. E50 is subject to Phosphothreonine. The segment covering 64 to 82 has biased composition (polar residues); it reads RPQTGGTWESQWSKTSQPE. T85 is subject to Phosphothreonine. An ARM repeat occupies 138–180; it reads GGIPIVANKINHSNQSIKEKALNALNNLSVNVENQIKIKIYIS.

As to quaternary structure, interacts with the DNA-binding domain of p53/TP53. In terms of tissue distribution, expressed in all tissues tested with higher expression in placenta, liver, kidney, heart and brain.

It localises to the endoplasmic reticulum membrane. Its subcellular location is the mitochondrion outer membrane. Functionally, may play a role in cell survival and cell growth. May suppress the transcriptional activity of p53/TP53. This Homo sapiens (Human) protein is Armadillo repeat-containing protein 10 (ARMC10).